The sequence spans 326 residues: Aspartate--ammonia ligase (326 aa).

This sequence belongs to the class-II aminoacyl-tRNA synthetase family. AsnA subfamily.

The protein resides in the cytoplasm. It carries out the reaction L-aspartate + NH4(+) + ATP = L-asparagine + AMP + diphosphate + H(+). The protein operates within amino-acid biosynthesis; L-asparagine biosynthesis; L-asparagine from L-aspartate (ammonia route): step 1/1. The protein is Aspartate--ammonia ligase of Malacoplasma penetrans (strain HF-2) (Mycoplasma penetrans).